The sequence spans 334 residues: Proline-serine-threonine phosphatase-interacting protein 2 (334 aa).

The F-BAR domain occupies 4–264; that stretch reads SLFKGNFWSA…SLEMCSIQRD (261 aa). Positions 66–166 form a coiled coil; the sequence is GQSEINTLKR…AVSRSANLVN (101 aa). The segment at 295–322 is disordered; the sequence is VPAGKATGPNLARRGPLPIPKSSPDDPN. Residues Tyr323 and Tyr329 each carry the phosphotyrosine modification.

In terms of processing, phosphorylated on tyrosine.

Its subcellular location is the cytoplasm. The protein localises to the membrane. In terms of biological role, binds to F-actin. May be involved in regulation of the actin cytoskeleton. In Homo sapiens (Human), this protein is Proline-serine-threonine phosphatase-interacting protein 2 (PSTPIP2).